The chain runs to 267 residues: Pro-opiomelanocortin (267 aa).

A signal peptide spans 1–26 (MPRLCGSRSGALLLTLLLQASMGVRG). Residue Phe-87 is modified to Phenylalanine amide. 2 disordered regions span residues 88–156 (GRRN…RPVK) and 215–242 (KKDE…GFMT). An N-linked (GlcNAc...) asparagine glycan is attached at Asn-91. The segment covering 94-105 (SSGGGGGGGGAG) has biased composition (gly residues). A propeptide spanning residues 109 to 133 (EEEEVAAGEGPGPRGDGVAPGPRQD) is cleaved from the precursor. A compositionally biased stretch (basic and acidic residues) spans 131 to 143 (RQDKRSYSMEHFR). Ser-136 bears the N-acetylserine; in Corticotropin mark. A Valine amide modification is found at Val-148. Over residues 215-237 (KKDEGPYKMEHFRWGSPPKDKRY) the composition is skewed to basic and acidic residues.

It belongs to the POMC family. Post-translationally, specific enzymatic cleavages at paired basic residues yield the different active peptides. ACTH and MSH are produced by the pituitary gland.

It localises to the secreted. In terms of biological role, stimulates the adrenal glands to release cortisol. Anorexigenic peptide. Increases the pigmentation of skin by increasing melanin production in melanocytes. Its function is as follows. Increases the pigmentation of skin by increasing melanin production in melanocytes. Functionally, endogenous orexigenic opiate. In terms of biological role, endogenous opiate. The protein is Pro-opiomelanocortin (POMC) of Sus scrofa (Pig).